The sequence spans 741 residues: 1,4-alpha-glucan branching enzyme GlgB (741 aa).

The active-site Nucleophile is the aspartate 420. Glutamate 473 (proton donor) is an active-site residue.

It belongs to the glycosyl hydrolase 13 family. GlgB subfamily. In terms of assembly, monomer.

It carries out the reaction Transfers a segment of a (1-&gt;4)-alpha-D-glucan chain to a primary hydroxy group in a similar glucan chain.. The protein operates within glycan biosynthesis; glycogen biosynthesis. Functionally, catalyzes the formation of the alpha-1,6-glucosidic linkages in glycogen by scission of a 1,4-alpha-linked oligosaccharide from growing alpha-1,4-glucan chains and the subsequent attachment of the oligosaccharide to the alpha-1,6 position. This is 1,4-alpha-glucan branching enzyme GlgB from Pseudomonas syringae pv. tomato (strain ATCC BAA-871 / DC3000).